A 945-amino-acid polypeptide reads, in one-letter code: Protein translocase subunit SecA (945 aa).

Residues Q90, 108–112 (GEGKT), and D509 each bind ATP. The disordered stretch occupies residues 533–568 (VKPEDGHKPPVPLQRRSESSGFGEDKDVTTDNSKPL). Basic and acidic residues predominate over residues 547–561 (RRSESSGFGEDKDVT).

This sequence belongs to the SecA family. In terms of assembly, monomer and homodimer. Part of the essential Sec protein translocation apparatus which comprises SecA, SecYEG and auxiliary proteins SecDF. Other proteins may also be involved.

The protein localises to the cell inner membrane. It localises to the cellular thylakoid membrane. Its subcellular location is the cytoplasm. It catalyses the reaction ATP + H2O + cellular proteinSide 1 = ADP + phosphate + cellular proteinSide 2.. In terms of biological role, part of the Sec protein translocase complex. Interacts with the SecYEG preprotein conducting channel. Has a central role in coupling the hydrolysis of ATP to the transfer of proteins into and across the cell membrane, serving as an ATP-driven molecular motor driving the stepwise translocation of polypeptide chains across the membrane. Probably participates in protein translocation into and across both the cytoplasmic and thylakoid membranes in cyanobacterial cells. The sequence is that of Protein translocase subunit SecA from Prochlorococcus marinus (strain MIT 9211).